Consider the following 492-residue polypeptide: Glutamyl-tRNA(Gln) amidotransferase subunit A (492 aa).

Catalysis depends on charge relay system residues Lys-78 and Ser-158. Ser-182 functions as the Acyl-ester intermediate in the catalytic mechanism.

Belongs to the amidase family. GatA subfamily. In terms of assembly, heterotrimer of A, B and C subunits.

The catalysed reaction is L-glutamyl-tRNA(Gln) + L-glutamine + ATP + H2O = L-glutaminyl-tRNA(Gln) + L-glutamate + ADP + phosphate + H(+). Its function is as follows. Allows the formation of correctly charged Gln-tRNA(Gln) through the transamidation of misacylated Glu-tRNA(Gln) in organisms which lack glutaminyl-tRNA synthetase. The reaction takes place in the presence of glutamine and ATP through an activated gamma-phospho-Glu-tRNA(Gln). This chain is Glutamyl-tRNA(Gln) amidotransferase subunit A, found in Rhodopseudomonas palustris (strain BisB5).